The chain runs to 397 residues: Tryptophan synthase beta chain (397 aa).

Lys87 bears the N6-(pyridoxal phosphate)lysine mark.

It belongs to the TrpB family. As to quaternary structure, tetramer of two alpha and two beta chains. Pyridoxal 5'-phosphate serves as cofactor.

It carries out the reaction (1S,2R)-1-C-(indol-3-yl)glycerol 3-phosphate + L-serine = D-glyceraldehyde 3-phosphate + L-tryptophan + H2O. Its pathway is amino-acid biosynthesis; L-tryptophan biosynthesis; L-tryptophan from chorismate: step 5/5. Functionally, the beta subunit is responsible for the synthesis of L-tryptophan from indole and L-serine. This Shigella boydii serotype 18 (strain CDC 3083-94 / BS512) protein is Tryptophan synthase beta chain.